The sequence spans 266 residues: tRNA pseudouridine synthase A (266 aa).

The active-site Nucleophile is the Asp-57. A substrate-binding site is contributed by Tyr-115.

This sequence belongs to the tRNA pseudouridine synthase TruA family. As to quaternary structure, homodimer.

The catalysed reaction is uridine(38/39/40) in tRNA = pseudouridine(38/39/40) in tRNA. In terms of biological role, formation of pseudouridine at positions 38, 39 and 40 in the anticodon stem and loop of transfer RNAs. This chain is tRNA pseudouridine synthase A, found in Buchnera aphidicola subsp. Acyrthosiphon pisum (strain Tuc7).